The following is a 160-amino-acid chain: Single-stranded DNA-binding protein 3 (160 aa).

Positions 2-104 (MNRVVLVGRL…IVAESVQFLE (103 aa)) constitute an SSB domain. Polar residues predominate over residues 106–133 (KQNGAGGSTSNNNQSETNYSNDNKTSSY). The interval 106-160 (KQNGAGGSTSNNNQSETNYSNDNKTSSYRADRSQNGDSFANEGAPVDINPDDLPF) is disordered.

As to quaternary structure, homotetramer.

This is Single-stranded DNA-binding protein 3 (ssb3) from Listeria innocua serovar 6a (strain ATCC BAA-680 / CLIP 11262).